A 267-amino-acid polypeptide reads, in one-letter code: Non-homologous end joining protein Ku (267 aa).

The Ku domain occupies 10–190; sequence ISFGLVSFPV…TKYTAKELEL (181 aa).

The protein belongs to the prokaryotic Ku family. In terms of assembly, homodimer. Interacts with LigD.

Its function is as follows. With LigD forms a non-homologous end joining (NHEJ) DNA repair enzyme, which repairs dsDNA breaks with reduced fidelity. Binds linear dsDNA with 5'- and 3'- overhangs but not closed circular dsDNA nor ssDNA. Recruits and stimulates the ligase activity of LigD. The chain is Non-homologous end joining protein Ku from Solibacter usitatus (strain Ellin6076).